Consider the following 636-residue polypeptide: 1-deoxy-D-xylulose-5-phosphate synthase (636 aa).

Residues histidine 74 and 115-117 (GHA) contribute to the thiamine diphosphate site. Aspartate 146 is a binding site for Mg(2+). Thiamine diphosphate contacts are provided by residues 147–148 (GA), asparagine 175, tyrosine 285, and glutamate 368. Asparagine 175 is a binding site for Mg(2+).

It belongs to the transketolase family. DXPS subfamily. In terms of assembly, homodimer. It depends on Mg(2+) as a cofactor. Requires thiamine diphosphate as cofactor.

The catalysed reaction is D-glyceraldehyde 3-phosphate + pyruvate + H(+) = 1-deoxy-D-xylulose 5-phosphate + CO2. It functions in the pathway metabolic intermediate biosynthesis; 1-deoxy-D-xylulose 5-phosphate biosynthesis; 1-deoxy-D-xylulose 5-phosphate from D-glyceraldehyde 3-phosphate and pyruvate: step 1/1. In terms of biological role, catalyzes the acyloin condensation reaction between C atoms 2 and 3 of pyruvate and glyceraldehyde 3-phosphate to yield 1-deoxy-D-xylulose-5-phosphate (DXP). This Anaeromyxobacter dehalogenans (strain 2CP-C) protein is 1-deoxy-D-xylulose-5-phosphate synthase.